The sequence spans 335 residues: Dihydroorotate dehydrogenase (quinone) (335 aa).

Residues Ala59–Lys63 and Thr83 each bind FMN. A substrate-binding site is contributed by Lys63. A substrate-binding site is contributed by Asn108–Phe112. FMN is bound by residues Asn136 and Asn169. Asn169 lines the substrate pocket. Ser172 (nucleophile) is an active-site residue. Residue Asn174 participates in substrate binding. FMN contacts are provided by Lys214 and Thr242. Asn243–Thr244 contacts substrate. FMN contacts are provided by residues Gly265, Gly294, and Tyr315–Ser316.

The protein belongs to the dihydroorotate dehydrogenase family. Type 2 subfamily. Monomer. Requires FMN as cofactor.

It localises to the cell membrane. It carries out the reaction (S)-dihydroorotate + a quinone = orotate + a quinol. It functions in the pathway pyrimidine metabolism; UMP biosynthesis via de novo pathway; orotate from (S)-dihydroorotate (quinone route): step 1/1. Functionally, catalyzes the conversion of dihydroorotate to orotate with quinone as electron acceptor. This Neisseria meningitidis serogroup B (strain ATCC BAA-335 / MC58) protein is Dihydroorotate dehydrogenase (quinone).